A 136-amino-acid chain; its full sequence is Transcription antitermination protein NusB (136 aa).

Belongs to the NusB family.

Its function is as follows. Involved in transcription antitermination. Required for transcription of ribosomal RNA (rRNA) genes. Binds specifically to the boxA antiterminator sequence of the ribosomal RNA (rrn) operons. The polypeptide is Transcription antitermination protein NusB (Kineococcus radiotolerans (strain ATCC BAA-149 / DSM 14245 / SRS30216)).